Consider the following 116-residue polypeptide: NADPH-dependent 7-cyano-7-deazaguanine reductase (116 aa).

Cys-31 acts as the Thioimide intermediate in catalysis. Residue Asp-38 is the Proton donor of the active site. Residues 53–55 (IEL) and 72–73 (YE) contribute to the substrate site.

It belongs to the GTP cyclohydrolase I family. QueF type 1 subfamily.

It localises to the cytoplasm. It carries out the reaction 7-aminomethyl-7-carbaguanine + 2 NADP(+) = 7-cyano-7-deazaguanine + 2 NADPH + 3 H(+). The protein operates within tRNA modification; tRNA-queuosine biosynthesis. Its function is as follows. Catalyzes the NADPH-dependent reduction of 7-cyano-7-deazaguanine (preQ0) to 7-aminomethyl-7-deazaguanine (preQ1). The protein is NADPH-dependent 7-cyano-7-deazaguanine reductase of Chlorobaculum parvum (strain DSM 263 / NCIMB 8327) (Chlorobium vibrioforme subsp. thiosulfatophilum).